A 429-amino-acid chain; its full sequence is 3-phosphoshikimate 1-carboxyvinyltransferase (429 aa).

3-phosphoshikimate-binding residues include K23, S24, and R28. A phosphoenolpyruvate-binding site is contributed by K23. Residues G95 and R123 each contribute to the phosphoenolpyruvate site. 3-phosphoshikimate-binding residues include S168, Q170, D316, and K343. Q170 is a binding site for phosphoenolpyruvate. D316 acts as the Proton acceptor in catalysis. 2 residues coordinate phosphoenolpyruvate: R347 and R389.

This sequence belongs to the EPSP synthase family. Monomer.

It is found in the cytoplasm. It catalyses the reaction 3-phosphoshikimate + phosphoenolpyruvate = 5-O-(1-carboxyvinyl)-3-phosphoshikimate + phosphate. The protein operates within metabolic intermediate biosynthesis; chorismate biosynthesis; chorismate from D-erythrose 4-phosphate and phosphoenolpyruvate: step 6/7. Its function is as follows. Catalyzes the transfer of the enolpyruvyl moiety of phosphoenolpyruvate (PEP) to the 5-hydroxyl of shikimate-3-phosphate (S3P) to produce enolpyruvyl shikimate-3-phosphate and inorganic phosphate. The protein is 3-phosphoshikimate 1-carboxyvinyltransferase of Bacillus thuringiensis (strain Al Hakam).